Consider the following 676-residue polypeptide: LIM domain-containing protein 1 (676 aa).

Positions 54-134 (KIHLQQQQQQ…PPYPPQEQRS (81 aa)) are mediates nuclear export. Disordered stretches follow at residues 104–163 (KPPL…SAFH) and 189–389 (KWGD…TSLV). Serine 145 is subject to Phosphoserine. The tract at residues 186–260 (ASPKWGDKPG…IGGRSSEKPT (75 aa)) is interaction with EGLN1/PHD2. Composition is skewed to low complexity over residues 201–213 (GLSV…SSPG) and 232–242 (LSLSSSRSSEG). Phosphoserine occurs at positions 233 and 239. The span at 243-253 (SLGGQNSGIGG) shows a compositional bias: gly residues. Residues 262–271 (LWSTASSQRV) show a composition bias toward polar residues. 4 positions are modified to phosphoserine: serine 272, serine 277, serine 304, and serine 316. A compositionally biased stretch (low complexity) spans 343-360 (SYLSSSAPSSSPAGLDGS). The segment at 404 to 442 (GPLGWSSDGSLGSVLLDSPSSPRVRLPCQPLVPGPELRP) is interaction with RB1. Serine 421 and serine 424 each carry phosphoserine. 3 LIM zinc-binding domains span residues 470 to 531 (GACV…SGFQ), 535 to 595 (DRCF…VLAP), and 595 to 664 (PKCA…RLEK). Residues 472-676 (CVKCSKGVFG…SSTALHQHHF (205 aa)) form a necessary for nuclear localization region.

It belongs to the zyxin/ajuba family. In terms of assembly, interacts (via LIM domains) with TRAF6. Found in a complex with TRAF6, PRKCZ and SQSTM1. Interacts (via LIM domains) SNAI2/SLUG (via SNAG domain) and SCRT1 (via SNAG domain). Interacts with SQSTM1 and RB1. Found in a complex composed of LIMD1, VHL, EGLN1/PHD2, ELOB and CUL2. Interacts with EIF4E, AGO1, AGO2, DCP2, DDX6, LATS1, LATS2, EGLN1/PHD2, EGLN2/PHD1 and EGLN3/PHD3. Interacts (via LIM zinc-binding 2) with isoform 1 and isoform 3 of VHL. Interacts (via LIM domains) with SNAI1 (via SNAG domain). Post-translationally, phosphorylated during mitosis. As to expression, expressed in normal and breast cancer tissues (at protein level). Ubiquitous.

The protein localises to the cytoplasm. It is found in the nucleus. It localises to the P-body. Its subcellular location is the cell junction. The protein resides in the adherens junction. The protein localises to the focal adhesion. Its function is as follows. Adapter or scaffold protein which participates in the assembly of numerous protein complexes and is involved in several cellular processes such as cell fate determination, cytoskeletal organization, repression of gene transcription, cell-cell adhesion, cell differentiation, proliferation and migration. Positively regulates microRNA (miRNA)-mediated gene silencing and is essential for P-body formation and integrity. Acts as a hypoxic regulator by bridging an association between the prolyl hydroxylases and VHL enabling efficient degradation of HIF1A. Acts as a transcriptional corepressor for SNAI1- and SNAI2/SLUG-dependent repression of E-cadherin transcription. Negatively regulates the Hippo signaling pathway and antagonizes phosphorylation of YAP1. Inhibits E2F-mediated transcription, and suppresses the expression of the majority of genes with E2F1-responsive elements. Regulates osteoblast development, function, differentiation and stress osteoclastogenesis. Enhances the ability of TRAF6 to activate adapter protein complex 1 (AP-1) and negatively regulates the canonical Wnt receptor signaling pathway in osteoblasts. May act as a tumor suppressor by inhibiting cell proliferation. The protein is LIM domain-containing protein 1 (LIMD1) of Homo sapiens (Human).